A 236-amino-acid polypeptide reads, in one-letter code: 2,3,4,5-tetrahydropyridine-2,6-dicarboxylate N-acetyltransferase (236 aa).

It belongs to the transferase hexapeptide repeat family. DapH subfamily.

The enzyme catalyses (S)-2,3,4,5-tetrahydrodipicolinate + acetyl-CoA + H2O = L-2-acetamido-6-oxoheptanedioate + CoA. It functions in the pathway amino-acid biosynthesis; L-lysine biosynthesis via DAP pathway; LL-2,6-diaminopimelate from (S)-tetrahydrodipicolinate (acetylase route): step 1/3. Functionally, catalyzes the transfer of an acetyl group from acetyl-CoA to tetrahydrodipicolinate. In Listeria innocua serovar 6a (strain ATCC BAA-680 / CLIP 11262), this protein is 2,3,4,5-tetrahydropyridine-2,6-dicarboxylate N-acetyltransferase.